Consider the following 370-residue polypeptide: Glutamate 5-kinase (370 aa).

Residue Lys13 participates in ATP binding. The substrate site is built by Ser54, Asp140, and Asn152. ATP-binding positions include 172–173 (SD) and 214–220 (SGGMVTK). Residues 278–355 (TGTLVLDAGA…GEIEAILGFR (78 aa)) enclose the PUA domain.

It belongs to the glutamate 5-kinase family.

It localises to the cytoplasm. It carries out the reaction L-glutamate + ATP = L-glutamyl 5-phosphate + ADP. Its pathway is amino-acid biosynthesis; L-proline biosynthesis; L-glutamate 5-semialdehyde from L-glutamate: step 1/2. In terms of biological role, catalyzes the transfer of a phosphate group to glutamate to form L-glutamate 5-phosphate. The chain is Glutamate 5-kinase from Paramagnetospirillum magneticum (strain ATCC 700264 / AMB-1) (Magnetospirillum magneticum).